Reading from the N-terminus, the 155-residue chain is Probable calcium-binding protein CML44 (155 aa).

EF-hand domains follow at residues 6-41 (ITTN…LGWA), 85-120 (DNDE…LGFE), and 130-155 (RMIR…ILHV). Ca(2+) is bound by residues aspartate 19, asparagine 21, aspartate 23, glutamate 30, aspartate 98, asparagine 100, aspartate 102, tyrosine 104, and glutamate 109.

In terms of biological role, potential calcium sensor. This is Probable calcium-binding protein CML44 (CML44) from Arabidopsis thaliana (Mouse-ear cress).